Consider the following 351-residue polypeptide: Nicotinate-nucleotide--dimethylbenzimidazole phosphoribosyltransferase (351 aa).

Residue glutamate 317 is the Proton acceptor of the active site.

Belongs to the CobT family.

The catalysed reaction is 5,6-dimethylbenzimidazole + nicotinate beta-D-ribonucleotide = alpha-ribazole 5'-phosphate + nicotinate + H(+). It functions in the pathway nucleoside biosynthesis; alpha-ribazole biosynthesis; alpha-ribazole from 5,6-dimethylbenzimidazole: step 1/2. Its function is as follows. Catalyzes the synthesis of alpha-ribazole-5'-phosphate from nicotinate mononucleotide (NAMN) and 5,6-dimethylbenzimidazole (DMB). The protein is Nicotinate-nucleotide--dimethylbenzimidazole phosphoribosyltransferase of Pseudomonas putida (strain GB-1).